Reading from the N-terminus, the 635-residue chain is Signal recognition particle subunit SRP72 (635 aa).

TPR repeat units lie at residues 7-42 (GGLYQCLTDISRADTSGDYQKALTSANKLIRKYPKE), 75-105 (GHVGFEKAYIHYRQDELDEAIKELNTCDKDD), 106-139 (VKALELKAQVFYKQENYQQAYDIYLYLLKNHSDD), 171-204 (YSQLYNRACVEIEAEKLPQALESLEKALKTCRKS), 220-253 (DSIRVQKAYVLQRMGQKAEALAIYEKVQAANHPD), 255-290 (SVKATITNNIPAASSDFALPESRKRFKAALQIDQTK), and 436-469 (VEVEQQRGNETAATKHLEKLVEKFPEDLQLQCRL). Residues 539–635 (KRKRKIRLPK…QKKKKNASKF (97 aa)) form a disordered region. A compositionally biased stretch (basic and acidic residues) spans 557 to 569 (DPERWLPRQERST). Basic residues predominate over residues 625–635 (KQKKKKNASKF).

Belongs to the SRP72 family. In terms of assembly, heterodimer with srpa-68. Srpa-68-srpa-72 heterodimer formation is stabilized by the presence of 7SL RNA. Component of a signal recognition particle (SRP) complex that consists of a 7SL RNA molecule of 300 nucleotides and six protein subunits: srpa-72, srpa-68, SRP54, F37F2.2/SRP19, F25G6.8/SRP14 and ZK512.4/SRP9. Within the SRP complex, interacts (via N-terminus) with srpa-68 (via C-terminus).

The protein localises to the cytoplasm. It is found in the endoplasmic reticulum. Component of the signal recognition particle (SRP) complex, a ribonucleoprotein complex that mediates the cotranslational targeting of secretory and membrane proteins to the endoplasmic reticulum (ER). The SRP complex interacts with the signal sequence in nascent secretory and membrane proteins and directs them to the membrane of the ER. The SRP complex targets the ribosome-nascent chain complex to the SRP receptor (SR), which is anchored in the ER, where SR compaction and GTPase rearrangement drive cotranslational protein translocation into the ER. Binds the signal recognition particle RNA (7SL RNA) in presence of srpa-68. Can bind 7SL RNA with low affinity. The SRP complex possibly participates in the elongation arrest function. The chain is Signal recognition particle subunit SRP72 from Caenorhabditis elegans.